Reading from the N-terminus, the 717-residue chain is Glutamate--cysteine ligase (717 aa).

The tract at residues 484 to 576 is disordered; the sequence is SKTTEQRAAK…TDSDHTDTDD (93 aa). Composition is skewed to low complexity over residues 492-518 and 551-567; these read AKAQAQAQAQAKAQAQTNGKATLNGNG and GTTNGTNGSSNGSSNGT.

Belongs to the glutamate--cysteine ligase type 3 family.

It catalyses the reaction L-cysteine + L-glutamate + ATP = gamma-L-glutamyl-L-cysteine + ADP + phosphate + H(+). The enzyme catalyses (2S)-2-aminobutanoate + L-glutamate + ATP = gamma-L-glutamyl-(2S)-2-aminobutanoate + ADP + phosphate + H(+). It participates in sulfur metabolism; glutathione biosynthesis; glutathione from L-cysteine and L-glutamate: step 1/2. Its function is as follows. Catalyzes the ATP-dependent ligation of L-glutamate and L-cysteine and participates in the first and rate-limiting step in glutathione biosynthesis. This chain is Glutamate--cysteine ligase, found in Drosophila melanogaster (Fruit fly).